Consider the following 545-residue polypeptide: uncharacterized protein (545 aa).

Composition is skewed to basic and acidic residues over residues 34–44 (PMNKQNEKLKT) and 53–63 (PRNDYSRRVSR). Disordered regions lie at residues 34–98 (PMNK…PESN), 269–296 (QNGTAGYSNSRKTSSPSYHKQSIPPQDS), and 415–444 (ERPQRKTEHVKTPEENLQTKNPTTMTSAPE). Positions 69-78 (TDSSEQQITA) are enriched in polar residues. Residues 415 to 428 (ERPQRKTEHVKTPE) show a composition bias toward basic and acidic residues. The segment covering 429-441 (ENLQTKNPTTMTS) has biased composition (polar residues).

This is an uncharacterized protein from Mus musculus (Mouse).